The sequence spans 387 residues: Exodeoxyribonuclease 7 large subunit (387 aa).

The protein belongs to the XseA family. As to quaternary structure, heterooligomer composed of large and small subunits.

Its subcellular location is the cytoplasm. It carries out the reaction Exonucleolytic cleavage in either 5'- to 3'- or 3'- to 5'-direction to yield nucleoside 5'-phosphates.. Its function is as follows. Bidirectionally degrades single-stranded DNA into large acid-insoluble oligonucleotides, which are then degraded further into small acid-soluble oligonucleotides. The sequence is that of Exodeoxyribonuclease 7 large subunit from Campylobacter fetus subsp. fetus (strain 82-40).